Consider the following 215-residue polypeptide: MSKVYDWFEERLEIQAIADDVTTKYVPPHVNIFYCLGGVTLVCFIIQFATGFAMTFYYRPTVTEAFNSIQYIMTEVNFGWLIRSIHRWSASMMVLMMILHVFRVYLTGGFKKPRELTWITGVVLAVITVTFGVTGYSLPWDQVGYWAVKIVSGVPEAIPVVGSSIVELLRGGTSVGQSTLTRFYSLHTFVLPWLIAVFMLLHFLMIRKQGISGPL.

The helical transmembrane segment at 32-52 (IFYCLGGVTLVCFIIQFATGF) threads the bilayer. C35 is a heme c binding site. Heme b is bound by residues H86 and H100. A run of 3 helical transmembrane segments spans residues 90–110 (ASMM…TGGF), 116–136 (LTWI…VTGY), and 186–206 (LHTF…FLMI). Residues H187 and H202 each coordinate heme b.

This sequence belongs to the cytochrome b family. PetB subfamily. In terms of assembly, the 4 large subunits of the cytochrome b6-f complex are cytochrome b6, subunit IV (17 kDa polypeptide, PetD), cytochrome f and the Rieske protein, while the 4 small subunits are PetG, PetL, PetM and PetN. The complex functions as a dimer. The cofactor is heme b. It depends on heme c as a cofactor.

It is found in the cellular thylakoid membrane. Component of the cytochrome b6-f complex, which mediates electron transfer between photosystem II (PSII) and photosystem I (PSI), cyclic electron flow around PSI, and state transitions. The protein is Cytochrome b6 of Acaryochloris marina (strain MBIC 11017).